Here is a 526-residue protein sequence, read N- to C-terminus: GFPGEKGPSGEAGTAGPPGTPGPQGLLGAPGILGLPGSRGERGLPGVAGALGEPGPLGIAGPPGARGPPGAVGSPGVNGAPGEAGRDGNPGSDGPPGRDGQPGHKGERGYPGNAGPVGAAGAPGPQGSVGPTGKHGNRGEPGPAGSIGPVGAAGPRGPSGPQGIRGDKGEPGDKGPRGLPGIKGHNGLQGLPGLAGQHGDQGAPGAVGPAGPRGPAGPTGPAGKDGRSGHPGTVGPAGLRGSQGSQGPAGPPGPPGPPGPPGASGGGYDFGYDGDFYRADQPRSPPSLRPKDYEVDATLKSLNNQIETLLTPEGSRKNPARTCRDLRLSHPEWSSGYYWIDPNQGCTMDAIKVYCDFSTGETCIRAQPENISVKNWYKSSKAKKHVWLGETINGGTQFEYNVEGVTSKEMATQLAFMRLLANHASQNITYHCKNSIAYMDEETGNLNKAVILQGSNDVELVAEGNSRFTYTVLVDGCTKKTNEWGKTIIEYKTNKPSRLPFLDIAPLDIGGADQEFYVDVGPVCFK.

The interval 1–291 is disordered; the sequence is GFPGEKGPSG…PRSPPSLRPK (291 aa). 3 stretches are compositionally biased toward low complexity: residues 9 to 36, 44 to 81, and 110 to 131; these read SGEAGTAGPPGTPGPQGLLGAPGILGLP, LPGVAGALGEPGPLGIAGPPGARGPPGAVGSPGVNGAP, and YPGNAGPVGAAGAPGPQGSVGP. Basic and acidic residues predominate over residues 165 to 176; that stretch reads RGDKGEPGDKGP. Pro residues predominate over residues 249–261; the sequence is AGPPGPPGPPGPP. Positions 263–526 are cleaved as a propeptide — C-terminal propeptide; sequence ASGGGYDFGY…YVDVGPVCFK (264 aa). The Fibrillar collagen NC1 domain maps to 293 to 526; the sequence is YEVDATLKSL…YVDVGPVCFK (234 aa). 3 disulfides stabilise this stretch: Cys-323–Cys-355, Cys-363–Cys-524, and Cys-432–Cys-477. Residues Asp-341, Asn-343, Gln-344, Cys-346, and Asp-349 each contribute to the Ca(2+) site.

It belongs to the fibrillar collagen family. As to quaternary structure, trimers of one alpha 2(I) and two alpha 1(I) chains. Interacts (via C-terminus) with TMEM131 (via PapD-L domain); the interaction is direct and is involved in assembly and TRAPPIII ER-to-Golgi transport complex-dependent secretion of collagen. Prolines at the third position of the tripeptide repeating unit (G-X-Y) are hydroxylated in some or all of the chains. Forms the fibrils of tendon, ligaments and bones. In bones the fibrils are mineralized with calcium hydroxyapatite.

The protein resides in the secreted. Its subcellular location is the extracellular space. It is found in the extracellular matrix. Its function is as follows. Type I collagen is a member of group I collagen (fibrillar forming collagen). This chain is Collagen alpha-2(I) chain (COL1A2), found in Oryctolagus cuniculus (Rabbit).